A 371-amino-acid chain; its full sequence is Alginate lyase (371 aa).

A signal peptide spans 1–28; the sequence is MRRPMTLFKRISSPALLALALFGGAAHA. Residues 67–68, 140–141, and Y258 contribute to the substrate site; these read SK and HT.

This sequence belongs to the polysaccharide lyase 5 family.

The protein resides in the periplasm. It carries out the reaction Eliminative cleavage of alginate to give oligosaccharides with 4-deoxy-alpha-L-erythro-hex-4-enuronosyl groups at their non-reducing ends and beta-D-mannuronate at their reducing end.. In terms of biological role, catalyzes the depolymerization of alginate by cleaving the beta-1,4 glycosidic bond between two adjacent sugar residues via a beta-elimination mechanism. May serve to degrade mislocalized alginate that is trapped in the periplasmic space. The protein is Alginate lyase of Pseudomonas putida (strain ATCC 47054 / DSM 6125 / CFBP 8728 / NCIMB 11950 / KT2440).